We begin with the raw amino-acid sequence, 329 residues long: MMSSSSSEIDVVKTRIPTYDEDDDTILYAYETKPDFVNKEPNTVSDASCNTEEQQKTVNDVLIHCQVIYDAMQNLDKKIDVIRRKVSKIQRFRARSLWTNRKRYGYKNYSYQLAKKLKRQKMKKNEVHESFSYPESYSPTLPVSRRENNSPSNLPRPSFRMEEYQRAEPEEDPILSRTPSPVHPSDFSEHNYQPYYASDGAMHGSSSGPCLGNPGANSIYNTYSTDHASAAQPSVTSSPFENDRYIEEGSITKHPSTWSVEAVVLFLKQTDPLALCPLVDLFRSHEIDGKALLLLTSDVLLKHLGVKLGTAVKLCYYIDRLKQGKCFEN.

The interval 125-194 (NEVHESFSYP…SDFSEHNYQP (70 aa)) is disordered. A Phosphoserine modification is found at S138. Residues 159–168 (FRMEEYQRAE) are compositionally biased toward basic and acidic residues. At S238 the chain carries Phosphoserine. Residues 258-325 (WSVEAVVLFL…YYIDRLKQGK (68 aa)) form the SAM domain.

It belongs to the SCM family. In terms of tissue distribution, highly expressed in testis and pancreas. Preferentially expressed in the germ stem cells of testis.

Its subcellular location is the nucleus. In terms of biological role, putative Polycomb group (PcG) protein. PcG proteins act by forming multiprotein complexes, which are required to maintain the transcriptionally repressive state of homeotic genes throughout development. May be involved in spermatogenesis during sexual maturation. In Macaca mulatta (Rhesus macaque), this protein is Sex comb on midleg-like protein 1 (SCML1).